Here is a 915-residue protein sequence, read N- to C-terminus: Probable LRR receptor-like serine/threonine-protein kinase At2g16250 (915 aa).

An N-terminal signal peptide occupies residues 1–28 (MVDQRRSALGFVLLLLCLVLFFDCVVVG). At 29–451 (QTQSRFSEKL…ISRRTVIILA (423 aa)) the chain is on the extracellular side. N-linked (GlcNAc...) asparagine glycans are attached at residues asparagine 71, asparagine 78, asparagine 101, asparagine 109, asparagine 150, asparagine 158, and asparagine 177. LRR repeat units follow at residues 102–125 (LTRL…WFGV), 127–150 (LLAL…TLGN), 151–174 (LTSL…SLGQ), 176–198 (LNLS…SFSS), 199–223 (LKNL…LGAL), 225–247 (KLIH…LGDL), 248–271 (VNLV…LRKL), 272–295 (SKLQ…LFSA), 297–320 (SQLQ…CWSL), 321–344 (PKLR…SYDS), and 366–390 (LRRF…VTGE). Residue asparagine 230 is glycosylated (N-linked (GlcNAc...) asparagine). The N-linked (GlcNAc...) asparagine glycan is linked to asparagine 332. Residues asparagine 391, asparagine 429, and asparagine 437 are each glycosylated (N-linked (GlcNAc...) asparagine). Residues 452–472 (AVGGGVAFILLFVILPIILVL) form a helical membrane-spanning segment. Residues 473–915 (CMRHRRRAAQ…AAYGVVEDNL (443 aa)) lie on the Cytoplasmic side of the membrane. The tract at residues 482–503 (QRGNNDRPKPAGEASQQPPKGA) is disordered. The region spanning 527–811 (FNDANLIKRG…IVNALENPLK (285 aa)) is the Protein kinase domain. ATP contacts are provided by residues 533–541 (IKRGHSGNL) and lysine 555. The active-site Proton acceptor is aspartate 657. The tract at residues 851–915 (TAVQAGATTS…AAYGVVEDNL (65 aa)) is disordered. Gly residues predominate over residues 859–870 (TSGGGGGGGGNG). Residues 871 to 892 (LRNSGSQGSSGRNNNNNGNSSS) show a composition bias toward low complexity.

This sequence belongs to the protein kinase superfamily. Ser/Thr protein kinase family.

It localises to the membrane. It carries out the reaction L-seryl-[protein] + ATP = O-phospho-L-seryl-[protein] + ADP + H(+). The catalysed reaction is L-threonyl-[protein] + ATP = O-phospho-L-threonyl-[protein] + ADP + H(+). The chain is Probable LRR receptor-like serine/threonine-protein kinase At2g16250 from Arabidopsis thaliana (Mouse-ear cress).